A 1783-amino-acid chain; its full sequence is 6-methylsalicylic acid synthase (1783 aa).

Polar residues predominate over residues 1 to 31 (MITSTSSTEVLTPANGSDDSKGTTTPATSSG). The disordered stretch occupies residues 1 to 40 (MITSTSSTEVLTPANGSDDSKGTTTPATSSGDPEMHDDLL). In terms of domain architecture, Ketosynthase family 3 (KS3) spans 45–474 (HDDVAIIGMA…GTVSHAIIEA (430 aa)). Active-site for beta-ketoacyl synthase activity residues include C217, H352, and H394. The malonyl-CoA:ACP transacylase (MAT) domain stretch occupies residues 587-884 (WVFSGHGAQW…TPTMVRKQPA (298 aa)). The active-site For acyl/malonyl transferase activity is S673. A product template (PT) domain region spans residues 942 to 1215 (THKPAANDLL…AFAGVEGESL (274 aa)). An N-terminal hotdog fold region spans residues 948 to 1064 (NDLLGTRTAL…ATVGADATPS (117 aa)). A PKS/mFAS DH domain is found at 948-1216 (NDLLGTRTAL…FAGVEGESLS (269 aa)). The Proton acceptor; for dehydratase activity role is filled by H980. Residues 1078–1216 (PQKLSDSFSI…FAGVEGESLS (139 aa)) are C-terminal hotdog fold. The Proton donor; for dehydratase activity role is filled by D1130. The region spanning 1707–1781 (EYVLVVVKKC…HLVEYFCQVL (75 aa)) is the Carrier domain. S1741 carries the O-(pantetheine 4'-phosphoryl)serine modification.

The catalysed reaction is 3 malonyl-CoA + acetyl-CoA + NADPH + 3 H(+) = 6-methylsalicylate + 3 CO2 + NADP(+) + 4 CoA + H2O. It functions in the pathway secondary metabolite biosynthesis; terpenoid biosynthesis. Non-reducing polyketide synthase; part of the gene cluster that mediates the biosynthesis of macrophorins, isoprenoid epoxycyclohexenones containing cyclized drimane moieties. The first step of the pathway is the synthesis of 6-methylsalicylic acid (6-MSA) by the polyketide synthase macA. 6-MSA is then converted to m-cresol by the decarboxylase macB. The cytochrome P450 monooxygenase macC then catalyzes the oxidation of m-cresol to toluquinol. Epoxidation of toluquinol is then performed by the short chain dehydrogenase macD, with the help of macE, and a further prenylation by macG leads to 7-deacetoxyyanuthone A. The next step is the hydroxylation of C-22 of 7-deacetoxyyanuthone A by the cytochrome P450 monooxygenase macH to yield 22-deacetylyanuthone A. O-Mevalon transferase macI then attaches mevalon to the hydroxyl group of 22-deacetylyanuthone A to produce yanuthone E. The terpene cyclase macJ catalyzes the cyclization of 22-deacetylyanuthone A to macrophorin A. MacJ is also able to catalyze cyclization of yanuthone E and 7-deacetoxyyanuthone A to their corresponding macrophorins. The macJ products can be further modified by macH and macJ, as well as by the FAD-dependent monooxygenase macF, to produce additional macrophorins, including 4'-oxomacrophorin A, 4'-oxomacrophorin D and 4'-oxomacrophorin E. The polypeptide is 6-methylsalicylic acid synthase (Penicillium terrestre).